Consider the following 316-residue polypeptide: Lipoyl synthase (316 aa).

Cys-66, Cys-71, Cys-77, Cys-92, Cys-96, Cys-99, and Ser-306 together coordinate [4Fe-4S] cluster. In terms of domain architecture, Radical SAM core spans 78–295; sequence FNRGTATFMI…NLIAFDLGFK (218 aa).

This sequence belongs to the radical SAM superfamily. Lipoyl synthase family. It depends on [4Fe-4S] cluster as a cofactor.

It is found in the cytoplasm. The enzyme catalyses [[Fe-S] cluster scaffold protein carrying a second [4Fe-4S](2+) cluster] + N(6)-octanoyl-L-lysyl-[protein] + 2 oxidized [2Fe-2S]-[ferredoxin] + 2 S-adenosyl-L-methionine + 4 H(+) = [[Fe-S] cluster scaffold protein] + N(6)-[(R)-dihydrolipoyl]-L-lysyl-[protein] + 4 Fe(3+) + 2 hydrogen sulfide + 2 5'-deoxyadenosine + 2 L-methionine + 2 reduced [2Fe-2S]-[ferredoxin]. Its pathway is protein modification; protein lipoylation via endogenous pathway; protein N(6)-(lipoyl)lysine from octanoyl-[acyl-carrier-protein]: step 2/2. Functionally, catalyzes the radical-mediated insertion of two sulfur atoms into the C-6 and C-8 positions of the octanoyl moiety bound to the lipoyl domains of lipoate-dependent enzymes, thereby converting the octanoylated domains into lipoylated derivatives. The sequence is that of Lipoyl synthase from Wigglesworthia glossinidia brevipalpis.